The sequence spans 234 residues: tRNA1(Val) (adenine(37)-N6)-methyltransferase (234 aa).

The protein belongs to the methyltransferase superfamily. tRNA (adenine-N(6)-)-methyltransferase family.

The protein localises to the cytoplasm. The enzyme catalyses adenosine(37) in tRNA1(Val) + S-adenosyl-L-methionine = N(6)-methyladenosine(37) in tRNA1(Val) + S-adenosyl-L-homocysteine + H(+). In terms of biological role, specifically methylates the adenine in position 37 of tRNA(1)(Val) (anticodon cmo5UAC). The protein is tRNA1(Val) (adenine(37)-N6)-methyltransferase of Flavobacterium psychrophilum (strain ATCC 49511 / DSM 21280 / CIP 103535 / JIP02/86).